Reading from the N-terminus, the 1188-residue chain is Carboxylic acid reductase (1188 aa).

AMP contacts are provided by residues H315, S408, 429–430 (DG), T434, D507, 519–522 (YVDR), K528, and K629. The 79-residue stretch at 665 to 743 (AGERPVIETV…SVAAHIEKER (79 aa)) folds into the Carrier domain. Residue S702 is modified to O-(pantetheine 4'-phosphoryl)serine. NADP(+) is bound by residues 801 to 804 (NGWL), R828, R838, 868 to 869 (DF), 894 to 896 (SGA), S934, Y970, K974, and S997.

The protein belongs to the ATP-dependent AMP-binding enzyme family. Carboxylic acid reductase subfamily. The cofactor is pantetheine 4'-phosphate.

The catalysed reaction is a carboxylate + ATP + NADPH + H(+) = an aldehyde + AMP + diphosphate + NADP(+). Functionally, catalyzes the ATP- and NADPH-dependent reduction of carboxylic acids to the corresponding aldehydes. Catalyzes the reduction of a very wide range of carboxylic acids, including benzoic acids, heterocyclic, phenylacetic, phenylpropanoic and fatty acid substrates. The protein is Carboxylic acid reductase of Segniliparus rugosus (strain ATCC BAA-974 / DSM 45345 / CCUG 50838 / CIP 108380 / JCM 13579 / CDC 945).